An 87-amino-acid chain; its full sequence is Cell division topological specificity factor (87 aa).

It belongs to the MinE family.

Prevents the cell division inhibition by proteins MinC and MinD at internal division sites while permitting inhibition at polar sites. This ensures cell division at the proper site by restricting the formation of a division septum at the midpoint of the long axis of the cell. The sequence is that of Cell division topological specificity factor from Neisseria meningitidis serogroup C (strain 053442).